Consider the following 261-residue polypeptide: MSRIRQAFAALDGGKALIAYITVGDPDIRTTLALMHGMVANGADILELGVPFSDPMADGPVIQRAAERALANGISLRDVLDVVRKFRETDTQTPVVLMGYLNPVHKMGYREFAQEAAKAGVDGVLTVDSPVETIDPLYRELKDNGVDCIFLIAPTTTEDRIKTIAELAGGFVYYVSLKGVTGAASLDTDEVSRKIEYLHQYIDIPIGVGFGISNAESARKIGRVADAVIVGSRIVKEIENNTGNEAAAVGALVKELKDAVR.

Active-site proton acceptor residues include E47 and D58.

Belongs to the TrpA family. Tetramer of two alpha and two beta chains.

It catalyses the reaction (1S,2R)-1-C-(indol-3-yl)glycerol 3-phosphate + L-serine = D-glyceraldehyde 3-phosphate + L-tryptophan + H2O. It functions in the pathway amino-acid biosynthesis; L-tryptophan biosynthesis; L-tryptophan from chorismate: step 5/5. The alpha subunit is responsible for the aldol cleavage of indoleglycerol phosphate to indole and glyceraldehyde 3-phosphate. The protein is Tryptophan synthase alpha chain of Neisseria meningitidis serogroup B (strain ATCC BAA-335 / MC58).